The primary structure comprises 223 residues: Pyridoxine/pyridoxamine 5'-phosphate oxidase (223 aa).

Residues 8–11 and Lys-65 contribute to the substrate site; that span reads RVDY. Residues 60–65, 75–76, Arg-81, Lys-82, and Gln-104 contribute to the FMN site; these read RTVLLK and YT. 3 residues coordinate substrate: Tyr-122, Arg-126, and Ser-130. Residues 139 to 140 and Trp-188 each bind FMN; that span reads QS. Residue 194–196 participates in substrate binding; the sequence is RLH. Residue Arg-198 participates in FMN binding.

The protein belongs to the pyridoxamine 5'-phosphate oxidase family. As to quaternary structure, homodimer. It depends on FMN as a cofactor.

The catalysed reaction is pyridoxamine 5'-phosphate + O2 + H2O = pyridoxal 5'-phosphate + H2O2 + NH4(+). It carries out the reaction pyridoxine 5'-phosphate + O2 = pyridoxal 5'-phosphate + H2O2. It participates in cofactor metabolism; pyridoxal 5'-phosphate salvage; pyridoxal 5'-phosphate from pyridoxamine 5'-phosphate: step 1/1. It functions in the pathway cofactor metabolism; pyridoxal 5'-phosphate salvage; pyridoxal 5'-phosphate from pyridoxine 5'-phosphate: step 1/1. In terms of biological role, catalyzes the oxidation of either pyridoxine 5'-phosphate (PNP) or pyridoxamine 5'-phosphate (PMP) into pyridoxal 5'-phosphate (PLP). This Kineococcus radiotolerans (strain ATCC BAA-149 / DSM 14245 / SRS30216) protein is Pyridoxine/pyridoxamine 5'-phosphate oxidase.